The sequence spans 491 residues: Angiopoietin-related protein 1 (491 aa).

A signal peptide spans 1 to 23 (MKAFIWTLSVLFFLLMGIGHGRG). A coiled-coil region spans residues 80 to 168 (ITRMDLENLK…LNVTTEMLKM (89 aa)). Residues Asn160 and Asn188 are each glycosylated (N-linked (GlcNAc...) asparagine). Residues 271–491 (FINEGPYKDC…AVQMLIKPID (221 aa)) form the Fibrinogen C-terminal domain. 2 disulfide bridges follow: Cys280–Cys309 and Cys432–Cys445.

It is found in the secreted. The protein is Angiopoietin-related protein 1 (ANGPTL1) of Bos taurus (Bovine).